A 329-amino-acid polypeptide reads, in one-letter code: Beta-tectorin (329 aa).

The signal sequence occupies residues 1 to 17; it reads MVAVTVYLMVILAQAFA. The ZP domain maps to 19 to 287; that stretch reads PCTPNKADVI…VTCDKRKQRM (269 aa). 4 N-linked (GlcNAc...) asparagine glycosylation sites follow: asparagine 80, asparagine 104, asparagine 116, and asparagine 145. A disulfide bond links cysteine 204 and cysteine 264. Glycine 304 is lipidated: GPI-anchor amidated glycine. The propeptide at 305–329 is removed in mature form; the sequence is LSRFYMLSDVIFHLLFAIGFCAILL.

May form homomeric filament after self-association or heteromeric filament after association with alpha-tectorin. Post-translationally, the N-terminus is blocked. In terms of processing, N-glycosylated. The presence of a hydrophobic C-terminus preceded by a potential cleavage site strongly suggests that tectorins are synthesized as glycosylphosphatidylinositol-linked, membrane-bound precursors. Tectorins are targeted to the apical surface of the inner ear epithelia by the lipid and proteolytically released into the extracellular compartment. As to expression, exclusively expressed in the inner ear, where it is found in basilar papilla, clear cells, supporting cells, cuboidal cells and the lagena macula.

It localises to the cell membrane. The protein localises to the secreted. Its subcellular location is the extracellular space. It is found in the extracellular matrix. Functionally, one of the major non-collagenous components of the tectorial membrane. The tectorial membrane is an extracellular matrix of the inner ear that covers the neuroepithelium of the cochlea and contacts the stereocilia bundles of specialized sensory hair cells. Sound induces movement of these hair cells relative to the tectorial membrane, deflects the stereocilia and leads to fluctuations in hair-cell membrane potential, transducing sound into electrical signals. The chain is Beta-tectorin (TECTB) from Gallus gallus (Chicken).